A 264-amino-acid chain; its full sequence is Undecaprenyl-diphosphatase (264 aa).

8 helical membrane passes run 7 to 27 (VVIL…SSGH), 39 to 59 (LPIV…MIYY), 89 to 109 (ILLI…IEMF), 112 to 132 (LFTL…LFLL), 145 to 165 (ILLA…PGIS), 182 to 202 (SESF…SLLL), 212 to 232 (MLFS…VGLF), and 244 to 264 (SKLY…YFLF).

The protein belongs to the UppP family.

The protein resides in the cell inner membrane. The catalysed reaction is di-trans,octa-cis-undecaprenyl diphosphate + H2O = di-trans,octa-cis-undecaprenyl phosphate + phosphate + H(+). In terms of biological role, catalyzes the dephosphorylation of undecaprenyl diphosphate (UPP). Confers resistance to bacitracin. This is Undecaprenyl-diphosphatase from Borrelia hermsii (strain HS1 / DAH).